The chain runs to 237 residues: MKNIQILFQTLNIFPKNLVLYKQALTHSSYSNEQTPPQEDNERLEFLGDAIVGLLMADYLYSQSKEDEGIMTKKRAQAVCEKSLTIYAQKIELQNYLLLGKGEKNKDFNAKGIMADTFEALFGAIYLDLGYLTAKKVFHNIVLPHLAKTIYIIDFKTQLQEIVQSEKKTIQYKIVQEQGPAHSKNFVAEVYLEKNLLGTGEGSTKKSAEQKAAQQALSKVAKTKDLIKNKGVKEKEL.

The region spanning Ile4 to Gly130 is the RNase III domain. A Mg(2+)-binding site is contributed by Glu45. Asp49 is an active-site residue. Mg(2+) contacts are provided by Asp116 and Glu119. Glu119 is a catalytic residue. In terms of domain architecture, DRBM spans Asp154–Lys222.

Belongs to the ribonuclease III family. As to quaternary structure, homodimer. Mg(2+) serves as cofactor.

The protein localises to the cytoplasm. It carries out the reaction Endonucleolytic cleavage to 5'-phosphomonoester.. Its function is as follows. Digests double-stranded RNA. Involved in the processing of primary rRNA transcript to yield the immediate precursors to the large and small rRNAs (23S and 16S). Processes some mRNAs, and tRNAs when they are encoded in the rRNA operon. Processes pre-crRNA and tracrRNA of type II CRISPR loci if present in the organism. The sequence is that of Ribonuclease 3 from Aster yellows witches'-broom phytoplasma (strain AYWB).